We begin with the raw amino-acid sequence, 297 residues long: tRNA pseudouridine synthase B (297 aa).

The active-site Nucleophile is the Asp44.

The protein belongs to the pseudouridine synthase TruB family. Type 1 subfamily.

It catalyses the reaction uridine(55) in tRNA = pseudouridine(55) in tRNA. In terms of biological role, responsible for synthesis of pseudouridine from uracil-55 in the psi GC loop of transfer RNAs. The sequence is that of tRNA pseudouridine synthase B from Corynebacterium glutamicum (strain R).